Here is a 208-residue protein sequence, read N- to C-terminus: Probable splicing factor, arginine/serine-rich 5 (208 aa).

Residues 2-74 (PRLYLGKIPY…MRLVVEMARG (73 aa)) form the RRM domain. Residues 71–208 (MARGKPRGND…RSPSPGSPKD (138 aa)) form a disordered region. The span at 84-123 (SRSPRRRSRSPRRRSRTPPRRRSRSRDRKRSRRSRSRSSS) shows a compositional bias: basic residues. Residues 128–153 (PVRESRRRSESRSPSPKRDLKREASR) are compositionally biased toward basic and acidic residues.

It belongs to the splicing factor SR family. Post-translationally, extensively phosphorylated on serine residues in the RS domain.

It localises to the nucleus. Plays a functionally redundant role in shifting germ cell sexual differentiation in hermaphrodites. The sequence is that of Probable splicing factor, arginine/serine-rich 5 (rsp-5) from Caenorhabditis elegans.